The sequence spans 131 residues: UPF0344 protein Sca_0577 (131 aa).

Transmembrane regions (helical) follow at residues 1 to 21, 42 to 62, 69 to 89, and 99 to 119; these read MLHL…VSYI, LFLV…FATA, LLTL…VTLV, and GLFW…IILP.

This sequence belongs to the UPF0344 family.

Its subcellular location is the cell membrane. The sequence is that of UPF0344 protein Sca_0577 from Staphylococcus carnosus (strain TM300).